Consider the following 251-residue polypeptide: Chloride intracellular channel protein 5 (251 aa).

The tract at residues 1-98 (MTDSATANGD…EEFLEETLTP (98 aa)) is required for insertion into the membrane. The G-site motif lies at 32-35 (CPFS). A helical membrane pass occupies residues 34–54 (FSQRLFMILWLKGVVFNVTTV). Residues 101–241 (YPKLAARHRE…AADSEIELAY (141 aa)) form the GST C-terminal domain.

Belongs to the chloride channel CLIC family. As to quaternary structure, component of a multimeric complex consisting of several cytoskeletal proteins, including actin, ezrin, alpha-actinin, gelsolin, and IQGAP1. Interacts with AKAP9. Interacts with TPRN. TPRN, CLIC5 and PTPQR form concentric rings at the base of stereocilia and may form a complex. Interacts with EZR, MYO6 and RDX; the proteins may work together as a complex to stabilize linkages between the plasma membrane and subjacent actin cytoskeleton at the stereocilium base. In terms of tissue distribution, detected in cochlea, in cochlear and vestibular hair cell bundles in the organ of Corti (at protein level). Expressed neonatal and adult cardiomyocytes (at protein level).

It is found in the golgi apparatus. It localises to the cytoplasm. The protein localises to the cytoskeleton. Its subcellular location is the microtubule organizing center. The protein resides in the centrosome. It is found in the cell cortex. It localises to the membrane. The protein localises to the apical cell membrane. Its subcellular location is the mitochondrion. The protein resides in the cell projection. It is found in the stereocilium. It catalyses the reaction Na(+)(in) = Na(+)(out). It carries out the reaction K(+)(in) = K(+)(out). The enzyme catalyses chloride(in) = chloride(out). With respect to regulation, inhibited by F-actin. Functionally, in the soluble state, catalyzes glutaredoxin-like thiol disulfide exchange reactions with reduced glutathione as electron donor. Can insert into membranes and form non-selective ion channels almost equally permeable to Na(+), K(+) and Cl(-). Required for normal hearing. It is necessary for the formation of stereocilia in the inner ear and normal development of the organ of Corti. May play a role in the regulation of transepithelial ion absorption and secretion. Is required for the development and/or maintenance of the proper glomerular endothelial cell and podocyte architecture. Plays a role in formation of the lens suture in the eye, which is important for normal optical properties of the lens. This Rattus norvegicus (Rat) protein is Chloride intracellular channel protein 5 (Clic5).